The sequence spans 340 residues: MTEKNAYAQSGVDIEAGYEVVARIKKHVARTERLGVMGALGGFGGMFDLSQLDVKEPVLISGTDGVGTKLMLAIKYDKHNTIGQDCVAMCVNDIIAAGAEPLYFLDYIATGKNEPAKLEQVVAGVAEGCVQAGAGLIGGETAEMPGMYGKDDYDLAGFAVGVAEKSQIIDGSKVKEGDVLLGLASSGIHSNGYSLVRRVFADYTGEEELPELEGKKLKDVLLEPTRIYVKAALPLIKEELVNGIAHITGGGFIENVPRMFGDDLAAEIEEDKVPVLPIFKALEKYGEIKHDEMFEIFNMGIGLMLAVSPEKVDRVKEVLDEPVYELGRIVKKADASVVIK.

It belongs to the AIR synthase family.

It is found in the cytoplasm. It catalyses the reaction 2-formamido-N(1)-(5-O-phospho-beta-D-ribosyl)acetamidine + ATP = 5-amino-1-(5-phospho-beta-D-ribosyl)imidazole + ADP + phosphate + H(+). It participates in purine metabolism; IMP biosynthesis via de novo pathway; 5-amino-1-(5-phospho-D-ribosyl)imidazole from N(2)-formyl-N(1)-(5-phospho-D-ribosyl)glycinamide: step 2/2. This chain is Phosphoribosylformylglycinamidine cyclo-ligase, found in Streptococcus mutans serotype c (strain ATCC 700610 / UA159).